The primary structure comprises 694 residues: Elongation factor G (694 aa).

One can recognise a tr-type G domain in the interval 8-287 (EDYRNFGIMA…AVVEFLPAPT (280 aa)). GTP contacts are provided by residues 17–24 (AHIDAGKT), 86–90 (DTPGH), and 140–143 (NKMD).

It belongs to the TRAFAC class translation factor GTPase superfamily. Classic translation factor GTPase family. EF-G/EF-2 subfamily.

Its subcellular location is the cytoplasm. In terms of biological role, catalyzes the GTP-dependent ribosomal translocation step during translation elongation. During this step, the ribosome changes from the pre-translocational (PRE) to the post-translocational (POST) state as the newly formed A-site-bound peptidyl-tRNA and P-site-bound deacylated tRNA move to the P and E sites, respectively. Catalyzes the coordinated movement of the two tRNA molecules, the mRNA and conformational changes in the ribosome. In Brucella abortus (strain S19), this protein is Elongation factor G.